Here is a 287-residue protein sequence, read N- to C-terminus: DDRGK domain-containing protein 1 (287 aa).

Over 1–5 the chain is Lumenal; that stretch reads MDLIL. Residues 6–26 traverse the membrane as a helical segment; the sequence is LLGIAVALLVILVTLFFFTKG. The Cytoplasmic portion of the chain corresponds to 27–287; sequence KGSQESGKYN…LINLVPVSAE (261 aa). 2 disordered regions span residues 28 to 102 and 135 to 164; these read GSQE…KRAK and KVEAEKEAEEERKREEAEKKAREEKARQEH. Low complexity predominate over residues 44–68; that stretch reads AQAAPRRAQVVRNQRNRARVAAAPA. A compositionally biased stretch (basic and acidic residues) spans 85 to 102; the sequence is IPHADFNGEKMGAKKRAK.

It belongs to the DDRGK1 family. In terms of assembly, interacts with Atg9; the interaction is transient.

The protein resides in the endoplasmic reticulum membrane. Functionally, substrate adapter for ufmylation, the covalent attachment of the ubiquitin-like modifier UFM1 to substrate proteins. Required for ufmylation of Atg9; protects the nervous system during aging, possibly by stabilizing Atg9 and supporting its function. The sequence is that of DDRGK domain-containing protein 1 from Culex quinquefasciatus (Southern house mosquito).